The following is a 286-amino-acid chain: Bifunctional protein FolD (286 aa).

Residues 166-168 (GAS) and Ile232 each bind NADP(+).

This sequence belongs to the tetrahydrofolate dehydrogenase/cyclohydrolase family. In terms of assembly, homodimer.

The enzyme catalyses (6R)-5,10-methylene-5,6,7,8-tetrahydrofolate + NADP(+) = (6R)-5,10-methenyltetrahydrofolate + NADPH. It catalyses the reaction (6R)-5,10-methenyltetrahydrofolate + H2O = (6R)-10-formyltetrahydrofolate + H(+). Its pathway is one-carbon metabolism; tetrahydrofolate interconversion. In terms of biological role, catalyzes the oxidation of 5,10-methylenetetrahydrofolate to 5,10-methenyltetrahydrofolate and then the hydrolysis of 5,10-methenyltetrahydrofolate to 10-formyltetrahydrofolate. This Vibrio campbellii (strain ATCC BAA-1116) protein is Bifunctional protein FolD.